We begin with the raw amino-acid sequence, 286 residues long: Putative short-chain type dehydrogenase/reductase Rv0148 (286 aa).

Residue 11-35 (VTGAGGGLGREYALTLAGEGASVVV) coordinates NAD(+). Ser-151 contacts substrate. The Proton acceptor role is filled by Tyr-164. Residue Lys-280 forms an Isoglutamyl lysine isopeptide (Lys-Gln) (interchain with Q-Cter in protein Pup) linkage.

The protein belongs to the short-chain dehydrogenases/reductases (SDR) family. Pupylated at Lys-280 by the prokaryotic ubiquitin-like protein Pup, which probably leads to its degradation by the proteasome.

This chain is Putative short-chain type dehydrogenase/reductase Rv0148, found in Mycobacterium tuberculosis (strain ATCC 25618 / H37Rv).